The chain runs to 564 residues: Nucleolus and neural progenitor protein (564 aa).

Residues 431-495 (GSRTSTSEHP…KRRCSGTVQR (65 aa)) are disordered. Positions 442 to 459 (RQRRSKYKVLSRQRKPQR) are enriched in basic residues. The tract at residues 442–460 (RQRRSKYKVLSRQRKPQRK) is nuclear localization signal. The segment covering 460 to 473 (KLQSTLLKETQQVP) has biased composition (polar residues).

This sequence belongs to the nepro family.

It localises to the nucleus. The protein localises to the nucleolus. Its function is as follows. May play a role in cortex development as part of the Notch signaling pathway. Downstream of Notch may repress the expression of proneural genes and inhibit neuronal differentiation thereby maintaining neural progenitors. May also play a role in preimplentation embryo development. The polypeptide is Nucleolus and neural progenitor protein (Mus musculus (Mouse)).